We begin with the raw amino-acid sequence, 129 residues long: Small ribosomal subunit protein uS11 (129 aa).

Belongs to the universal ribosomal protein uS11 family. As to quaternary structure, part of the 30S ribosomal subunit. Interacts with proteins S7 and S18. Binds to IF-3.

In terms of biological role, located on the platform of the 30S subunit, it bridges several disparate RNA helices of the 16S rRNA. Forms part of the Shine-Dalgarno cleft in the 70S ribosome. The protein is Small ribosomal subunit protein uS11 of Bacillus cytotoxicus (strain DSM 22905 / CIP 110041 / 391-98 / NVH 391-98).